The following is an 891-amino-acid chain: Alanine--tRNA ligase (891 aa).

Residues H564, H568, C677, and H681 each coordinate Zn(2+).

This sequence belongs to the class-II aminoacyl-tRNA synthetase family. Requires Zn(2+) as cofactor.

It localises to the cytoplasm. The catalysed reaction is tRNA(Ala) + L-alanine + ATP = L-alanyl-tRNA(Ala) + AMP + diphosphate. Catalyzes the attachment of alanine to tRNA(Ala) in a two-step reaction: alanine is first activated by ATP to form Ala-AMP and then transferred to the acceptor end of tRNA(Ala). Also edits incorrectly charged Ser-tRNA(Ala) and Gly-tRNA(Ala) via its editing domain. This is Alanine--tRNA ligase from Bradyrhizobium sp. (strain ORS 278).